We begin with the raw amino-acid sequence, 1836 residues long: U3 small nucleolar RNA-associated protein 10 (1836 aa).

Residues 245–283 (EVVGFLLLPSKYETLRNIDVDTRLTAYSIIAVLASIIPI) form an HEAT 1 repeat. Residues 453–473 (SNSSVRDSDDVEFDAGEEDNN) are disordered. Over residues 461-473 (DDVEFDAGEEDNN) the composition is skewed to acidic residues. HEAT repeat units lie at residues 585–623 (PLDL…TTTS) and 813–850 (VENR…DQDL). A disordered region spans residues 863–883 (QIPEQGPAKRRRRSSSSTKQA). A run of 2 helical transmembrane segments spans residues 998–1018 (LLLV…HSVM) and 1085–1105 (LFTY…LLFL). HEAT repeat units lie at residues 1333–1372 (ESVL…KFGA), 1749–1787 (ETLV…KMGE), and 1790–1828 (LTYL…NVLG).

This sequence belongs to the HEATR1/UTP10 family. As to quaternary structure, component of the ribosomal small subunit (SSU) processome.

It is found in the nucleus. It localises to the nucleolus. The protein localises to the membrane. Functionally, involved in nucleolar processing of pre-18S ribosomal RNA. Involved in ribosome biosynthesis. The sequence is that of U3 small nucleolar RNA-associated protein 10 from Scheffersomyces stipitis (strain ATCC 58785 / CBS 6054 / NBRC 10063 / NRRL Y-11545) (Yeast).